Consider the following 224-residue polypeptide: Urease accessory protein UreF 2 (224 aa).

The protein belongs to the UreF family. In terms of assembly, ureD, UreF and UreG form a complex that acts as a GTP-hydrolysis-dependent molecular chaperone, activating the urease apoprotein by helping to assemble the nickel containing metallocenter of UreC. The UreE protein probably delivers the nickel.

It is found in the cytoplasm. Its function is as follows. Required for maturation of urease via the functional incorporation of the urease nickel metallocenter. This Pseudomonas syringae pv. tomato (strain ATCC BAA-871 / DC3000) protein is Urease accessory protein UreF 2.